The following is a 605-amino-acid chain: Putative zinc finger CCCH domain-containing protein 57 (605 aa).

Disordered stretches follow at residues 198 to 218 (RHTG…GREV), 238 to 261 (LLQD…DGEV), and 375 to 403 (QASH…YQQP). Composition is skewed to basic and acidic residues over residues 201-218 (GHES…GREV) and 238-250 (LLQD…RADA). Low complexity predominate over residues 389-403 (FPFQQQPQHDGYQQP). 2 consecutive C3H1-type zinc fingers follow at residues 519–547 (EPKT…HSQD) and 557–585 (KYRT…QHRL).

This is Putative zinc finger CCCH domain-containing protein 57 from Oryza sativa subsp. japonica (Rice).